The chain runs to 537 residues: ATP synthase subunit beta 1 (537 aa).

164-171 contributes to the ATP binding site; that stretch reads GGAGVGKT. Residues 471 to 537 form a disordered region; it reads PKQSATEKNS…ESLEEPQNGR (67 aa). 2 stretches are compositionally biased toward polar residues: residues 473-498 and 507-528; these read QSAT…SPGP and IPSS…AQNE.

Belongs to the ATPase alpha/beta chains family. In terms of assembly, F-type ATPases have 2 components, CF(1) - the catalytic core - and CF(0) - the membrane proton channel. CF(1) has five subunits: alpha(3), beta(3), gamma(1), delta(1), epsilon(1). CF(0) has three main subunits: a(1), b(2) and c(9-12). The alpha and beta chains form an alternating ring which encloses part of the gamma chain. CF(1) is attached to CF(0) by a central stalk formed by the gamma and epsilon chains, while a peripheral stalk is formed by the delta and b chains.

The protein localises to the cell inner membrane. The enzyme catalyses ATP + H2O + 4 H(+)(in) = ADP + phosphate + 5 H(+)(out). Produces ATP from ADP in the presence of a proton gradient across the membrane. The catalytic sites are hosted primarily by the beta subunits. The protein is ATP synthase subunit beta 1 of Pseudoalteromonas atlantica (strain T6c / ATCC BAA-1087).